We begin with the raw amino-acid sequence, 273 residues long: Beta-lactamase OXA-133 (273 aa).

The signal sequence occupies residues 1–17 (MNKYFTCYVVASLFFSG). Residue Cys18 is the site of N-palmitoyl cysteine attachment. Cys18 carries the S-diacylglycerol cysteine lipid modification. Ser79 acts as the Acyl-ester intermediate in catalysis. N6-carboxylysine is present on Lys82. 216–218 (KTG) contributes to the substrate binding site.

This sequence belongs to the class-D beta-lactamase family.

It is found in the cell membrane. The enzyme catalyses a beta-lactam + H2O = a substituted beta-amino acid. Catalyzes the hydrolysis of beta-lactam antibiotics. The chain is Beta-lactamase OXA-133 from Acinetobacter radioresistens.